The primary structure comprises 407 residues: Arginine biosynthesis bifunctional protein ArgJ (407 aa).

T155, K181, T192, E278, N402, and T407 together coordinate substrate. Residue T192 is the Nucleophile of the active site.

Belongs to the ArgJ family. In terms of assembly, heterotetramer of two alpha and two beta chains.

The protein localises to the cytoplasm. The enzyme catalyses N(2)-acetyl-L-ornithine + L-glutamate = N-acetyl-L-glutamate + L-ornithine. It catalyses the reaction L-glutamate + acetyl-CoA = N-acetyl-L-glutamate + CoA + H(+). The protein operates within amino-acid biosynthesis; L-arginine biosynthesis; L-ornithine and N-acetyl-L-glutamate from L-glutamate and N(2)-acetyl-L-ornithine (cyclic): step 1/1. It functions in the pathway amino-acid biosynthesis; L-arginine biosynthesis; N(2)-acetyl-L-ornithine from L-glutamate: step 1/4. Catalyzes two activities which are involved in the cyclic version of arginine biosynthesis: the synthesis of N-acetylglutamate from glutamate and acetyl-CoA as the acetyl donor, and of ornithine by transacetylation between N(2)-acetylornithine and glutamate. This Thiobacillus denitrificans (strain ATCC 25259 / T1) protein is Arginine biosynthesis bifunctional protein ArgJ.